A 130-amino-acid chain; its full sequence is uncharacterized protein (130 aa).

2 stretches are compositionally biased toward polar residues: residues 1 to 27 and 36 to 46; these read MEIL…QPSQ and QAENQETAKNG. Disordered stretches follow at residues 1 to 46 and 103 to 130; these read MEIL…AKNG and VSAQ…ELDL. Residues 27-51 are a coiled coil; it reads QDAHEKARQQAENQETAKNGMISQI.

The protein belongs to the PDCD5 family.

This is an uncharacterized protein from Caenorhabditis elegans.